The chain runs to 313 residues: Zinc transporter ZitB (313 aa).

At methionine 1–arginine 20 the chain is on the cytoplasmic side. Residues leucine 21–leucine 41 traverse the membrane as a helical segment. Residues serine 42–leucine 47 lie on the Periplasmic side of the membrane. Residues leucine 48–valine 68 traverse the membrane as a helical segment. Topologically, residues glutamine 69–leucine 89 are cytoplasmic. Residues alanine 90–isoleucine 110 traverse the membrane as a helical segment. Topologically, residues glutamate 111–glycine 121 are periplasmic. Residues glycine 122–leucine 142 traverse the membrane as a helical segment. The Cytoplasmic segment spans residues histidine 143 to histidine 159. A helical transmembrane segment spans residues valine 160–threonine 180. A topological domain (periplasmic) is located at residue glycine 181. Residues tryptophan 182 to tryptophan 202 traverse the membrane as a helical segment. The Cytoplasmic segment spans residues arginine 203 to histidine 313.

This sequence belongs to the cation diffusion facilitator (CDF) transporter (TC 2.A.4) family. SLC30A subfamily.

It localises to the cell inner membrane. In terms of biological role, involved in zinc efflux across the cytoplasmic membrane, thus reducing zinc accumulation in the cytoplasm and rendering bacteria more resistant to zinc. It may contribute to zinc homeostasis at low concentrations of zinc, whereas ZntA is required for growth at more toxic concentrations. This is Zinc transporter ZitB (zitB) from Escherichia coli (strain K12).